The primary structure comprises 395 residues: Elongation factor Tu (395 aa).

Residues 10 to 205 (KVHMNVGTIG…TMDEYFKDPV (196 aa)) enclose the tr-type G domain. A G1 region spans residues 19 to 26 (GHVDHGKT). Position 19–26 (19–26 (GHVDHGKT)) interacts with GTP. Threonine 26 lines the Mg(2+) pocket. The segment at 60–64 (GITIN) is G2. Residues 81 to 84 (DCPG) are G3. GTP contacts are provided by residues 81-85 (DCPGH) and 136-139 (NKVD). Residues 136–139 (NKVD) are G4. The interval 173–175 (SAF) is G5.

The protein belongs to the TRAFAC class translation factor GTPase superfamily. Classic translation factor GTPase family. EF-Tu/EF-1A subfamily. As to quaternary structure, monomer.

It localises to the cytoplasm. It carries out the reaction GTP + H2O = GDP + phosphate + H(+). In terms of biological role, GTP hydrolase that promotes the GTP-dependent binding of aminoacyl-tRNA to the A-site of ribosomes during protein biosynthesis. This chain is Elongation factor Tu, found in Treponema denticola (strain ATCC 35405 / DSM 14222 / CIP 103919 / JCM 8153 / KCTC 15104).